A 185-amino-acid chain; its full sequence is Elongation factor P (185 aa).

Belongs to the elongation factor P family.

It localises to the cytoplasm. It participates in protein biosynthesis; polypeptide chain elongation. Involved in peptide bond synthesis. Stimulates efficient translation and peptide-bond synthesis on native or reconstituted 70S ribosomes in vitro. Probably functions indirectly by altering the affinity of the ribosome for aminoacyl-tRNA, thus increasing their reactivity as acceptors for peptidyl transferase. This Clostridium perfringens (strain ATCC 13124 / DSM 756 / JCM 1290 / NCIMB 6125 / NCTC 8237 / Type A) protein is Elongation factor P.